Reading from the N-terminus, the 284-residue chain is 4-hydroxybenzoate octaprenyltransferase (284 aa).

The next 9 membrane-spanning stretches (helical) occupy residues isoleucine 19–leucine 39, isoleucine 42–isoleucine 62, glycine 85–isoleucine 105, valine 107–leucine 127, phenylalanine 134–phenylalanine 154, alanine 165–leucine 185, isoleucine 211–phenylalanine 231, serine 233–tyrosine 253, and cysteine 261–isoleucine 281.

Belongs to the UbiA prenyltransferase family. Requires Mg(2+) as cofactor.

The protein resides in the cell inner membrane. It catalyses the reaction all-trans-octaprenyl diphosphate + 4-hydroxybenzoate = 4-hydroxy-3-(all-trans-octaprenyl)benzoate + diphosphate. It functions in the pathway cofactor biosynthesis; ubiquinone biosynthesis. Functionally, catalyzes the prenylation of para-hydroxybenzoate (PHB) with an all-trans polyprenyl group. Mediates the second step in the final reaction sequence of ubiquinone-8 (UQ-8) biosynthesis, which is the condensation of the polyisoprenoid side chain with PHB, generating the first membrane-bound Q intermediate 3-octaprenyl-4-hydroxybenzoate. This chain is 4-hydroxybenzoate octaprenyltransferase, found in Francisella tularensis subsp. novicida (strain U112).